Reading from the N-terminus, the 434-residue chain is UDP-N-acetylglucosamine 1-carboxyvinyltransferase (434 aa).

Residue Lys22 to Asn23 coordinates phosphoenolpyruvate. Arg97 serves as a coordination point for UDP-N-acetyl-alpha-D-glucosamine. Residue Asp121 is the Proton donor of the active site. UDP-N-acetyl-alpha-D-glucosamine is bound by residues Asp319 and Met341.

The protein belongs to the EPSP synthase family. MurA subfamily.

It is found in the cytoplasm. The enzyme catalyses phosphoenolpyruvate + UDP-N-acetyl-alpha-D-glucosamine = UDP-N-acetyl-3-O-(1-carboxyvinyl)-alpha-D-glucosamine + phosphate. Its pathway is cell wall biogenesis; peptidoglycan biosynthesis. Cell wall formation. Adds enolpyruvyl to UDP-N-acetylglucosamine. In Bacteroides thetaiotaomicron (strain ATCC 29148 / DSM 2079 / JCM 5827 / CCUG 10774 / NCTC 10582 / VPI-5482 / E50), this protein is UDP-N-acetylglucosamine 1-carboxyvinyltransferase.